We begin with the raw amino-acid sequence, 163 residues long: Small ribosomal subunit protein uS5 (163 aa).

Residues 8–71 (LIEKIVDLNR…ERAKKGMVQV (64 aa)) enclose the S5 DRBM domain.

The protein belongs to the universal ribosomal protein uS5 family. In terms of assembly, part of the 30S ribosomal subunit. Contacts proteins S4 and S8.

Its function is as follows. With S4 and S12 plays an important role in translational accuracy. Located at the back of the 30S subunit body where it stabilizes the conformation of the head with respect to the body. The sequence is that of Small ribosomal subunit protein uS5 from Oleidesulfovibrio alaskensis (strain ATCC BAA-1058 / DSM 17464 / G20) (Desulfovibrio alaskensis).